The sequence spans 67 residues: Vespin (67 aa).

An N-terminal signal peptide occupies residues 1–21; it reads MHPIIWELSHMVDLQAAAQKL.

Expressed by the venom gland.

It localises to the secreted. Its function is as follows. Shows contractile activity on isolated ileum smooth muscle. The sequence is that of Vespin from Vespa magnifica (Hornet).